Reading from the N-terminus, the 123-residue chain is Ribosome-binding factor A (123 aa).

The protein belongs to the RbfA family. As to quaternary structure, monomer. Binds 30S ribosomal subunits, but not 50S ribosomal subunits or 70S ribosomes.

It is found in the cytoplasm. One of several proteins that assist in the late maturation steps of the functional core of the 30S ribosomal subunit. Associates with free 30S ribosomal subunits (but not with 30S subunits that are part of 70S ribosomes or polysomes). Required for efficient processing of 16S rRNA. May interact with the 5'-terminal helix region of 16S rRNA. The chain is Ribosome-binding factor A from Geotalea daltonii (strain DSM 22248 / JCM 15807 / FRC-32) (Geobacter daltonii).